Consider the following 357-residue polypeptide: Ribosomal RNA large subunit methyltransferase M (357 aa).

Residues Ser183, 216 to 219 (APGG), Asp235, Asp255, and Asp271 contribute to the S-adenosyl-L-methionine site. The Proton acceptor role is filled by Lys300.

The protein belongs to the class I-like SAM-binding methyltransferase superfamily. RNA methyltransferase RlmE family. RlmM subfamily. As to quaternary structure, monomer.

It is found in the cytoplasm. The catalysed reaction is cytidine(2498) in 23S rRNA + S-adenosyl-L-methionine = 2'-O-methylcytidine(2498) in 23S rRNA + S-adenosyl-L-homocysteine + H(+). Functionally, catalyzes the 2'-O-methylation at nucleotide C2498 in 23S rRNA. The chain is Ribosomal RNA large subunit methyltransferase M from Pseudomonas syringae pv. syringae (strain B728a).